Consider the following 131-residue polypeptide: Ribosome-binding factor A (131 aa).

Belongs to the RbfA family. As to quaternary structure, monomer. Binds 30S ribosomal subunits, but not 50S ribosomal subunits or 70S ribosomes.

Its subcellular location is the cytoplasm. One of several proteins that assist in the late maturation steps of the functional core of the 30S ribosomal subunit. Associates with free 30S ribosomal subunits (but not with 30S subunits that are part of 70S ribosomes or polysomes). Required for efficient processing of 16S rRNA. May interact with the 5'-terminal helix region of 16S rRNA. This is Ribosome-binding factor A from Chromohalobacter salexigens (strain ATCC BAA-138 / DSM 3043 / CIP 106854 / NCIMB 13768 / 1H11).